The primary structure comprises 347 residues: UDP-rhamnose/UDP-galactose transporter 1 (347 aa).

Transmembrane regions (helical) follow at residues 11 to 31 (AVSD…IIMA), 43 to 63 (FGFA…VGMV), 80 to 100 (LLWF…SLML), 103 to 123 (VGFY…LEWI), 132 to 152 (EVKA…VTDV), 159 to 179 (FICA…IGSL), 195 to 215 (APIQ…LLSG), 223 to 243 (MTYG…FCNI), 256 to 276 (SFQV…WLLF), and 285 to 305 (IAGM…VDIE).

This sequence belongs to the TPT transporter family. TPT (TC 2.A.7.9) subfamily. Widely expressed in the whole plant.

The protein resides in the golgi apparatus membrane. In terms of biological role, nucleotide-sugar transporter that transports UDP-rhamnose or UDP-galactose and UMP in a strict counter-exchange mode. The chain is UDP-rhamnose/UDP-galactose transporter 1 from Arabidopsis thaliana (Mouse-ear cress).